Consider the following 220-residue polypeptide: GTP cyclohydrolase 1 (220 aa).

Positions 109, 112, and 180 each coordinate Zn(2+).

This sequence belongs to the GTP cyclohydrolase I family. Toroid-shaped homodecamer, composed of two pentamers of five dimers.

The enzyme catalyses GTP + H2O = 7,8-dihydroneopterin 3'-triphosphate + formate + H(+). Its pathway is cofactor biosynthesis; 7,8-dihydroneopterin triphosphate biosynthesis; 7,8-dihydroneopterin triphosphate from GTP: step 1/1. This Yersinia pseudotuberculosis serotype O:1b (strain IP 31758) protein is GTP cyclohydrolase 1.